Here is a 362-residue protein sequence, read N- to C-terminus: Molybdenum import ATP-binding protein ModC (362 aa).

Residues 2-236 (ASPIEVRLQM…LDLPLAMGSD (235 aa)) form the ABC transporter domain. 34-41 (GPSGSGKT) serves as a coordination point for ATP. A Mop domain is found at 297-362 (QSSILNRLPV…AQIKAVAVLA (66 aa)).

It belongs to the ABC transporter superfamily. Molybdate importer (TC 3.A.1.8) family. In terms of assembly, the complex is composed of two ATP-binding proteins (ModC), two transmembrane proteins (ModB) and a solute-binding protein (ModA).

The protein localises to the cell inner membrane. The enzyme catalyses molybdate(out) + ATP + H2O = molybdate(in) + ADP + phosphate + H(+). Its function is as follows. Part of the ABC transporter complex ModABC involved in molybdenum import. Responsible for energy coupling to the transport system. The chain is Molybdenum import ATP-binding protein ModC from Pseudomonas syringae pv. syringae (strain B728a).